A 406-amino-acid chain; its full sequence is Argininosuccinate synthase (406 aa).

8–16 (AYSGGLDTS) lines the ATP pocket. Tyr-86 contributes to the L-citrulline binding site. Position 116 (Gly-116) interacts with ATP. The L-aspartate site is built by Thr-118, Asn-122, and Asp-123. Asn-122 contacts L-citrulline. L-citrulline-binding residues include Arg-126, Ser-174, Glu-259, and Tyr-271.

The protein belongs to the argininosuccinate synthase family. Type 1 subfamily. In terms of assembly, homotetramer.

Its subcellular location is the cytoplasm. It catalyses the reaction L-citrulline + L-aspartate + ATP = 2-(N(omega)-L-arginino)succinate + AMP + diphosphate + H(+). It participates in amino-acid biosynthesis; L-arginine biosynthesis; L-arginine from L-ornithine and carbamoyl phosphate: step 2/3. This chain is Argininosuccinate synthase, found in Lacticaseibacillus paracasei (strain ATCC 334 / BCRC 17002 / CCUG 31169 / CIP 107868 / KCTC 3260 / NRRL B-441) (Lactobacillus paracasei).